We begin with the raw amino-acid sequence, 909 residues long: Yellow mounds protein A (909 aa).

The MIF4G domain occupies Leu7–Lys283. Disordered regions lie at residues Ser178–Ile232, Met415–Lys439, Ile460–Pro537, Val627–Arg689, and Ser704–His774. Acidic residues predominate over residues Asp204–Asn215. 2 stretches are compositionally biased toward low complexity: residues Asn216–Asn231 and Ser417–Ser436. The span at Arg473–Gln490 shows a compositional bias: polar residues. The segment covering Asn491 to Asn525 has biased composition (low complexity). A compositionally biased stretch (polar residues) spans Ser721–Ile738. The span at Thr739–Thr756 shows a compositional bias: low complexity. A coiled-coil region spans residues Thr845–Ile877.

In terms of biological role, plays as essential role in regulating terminal differentiation. The polypeptide is Yellow mounds protein A (yelA) (Dictyostelium discoideum (Social amoeba)).